We begin with the raw amino-acid sequence, 170 residues long: Urease accessory protein UreE (170 aa).

Positions 137–170 (PFDPESGAYAHAGREQSHAHSHEHSHADGHTHAH) are disordered. A compositionally biased stretch (basic and acidic residues) spans 148 to 170 (AGREQSHAHSHEHSHADGHTHAH).

Belongs to the UreE family.

The protein localises to the cytoplasm. In terms of biological role, involved in urease metallocenter assembly. Binds nickel. Probably functions as a nickel donor during metallocenter assembly. The sequence is that of Urease accessory protein UreE from Pseudoalteromonas translucida (strain TAC 125).